The chain runs to 246 residues: Histone H1 (246 aa).

2 disordered regions span residues 1–51 and 105–246; these read MATD…PTHL and GGKL…KAKK. Over residues 9–34 the composition is skewed to low complexity; that stretch reads PAPLVDAAPEAPADAPAAPAADANAA. Basic residues predominate over residues 35-47; it reads KAKKATAPKKRAS. Residues 49–119 form the H15 domain; that stretch reads THLPYAEMVS…KVKNSYKLSS (71 aa). Basic residues-rich tracts occupy residues 129 to 189 and 198 to 208; these read AAPK…KAKP and PLAKKAGRAKA. A compositionally biased stretch (low complexity) spans 224–235; sequence KKAAPSKKAATP.

This sequence belongs to the histone H1/H5 family.

The protein resides in the nucleus. It localises to the chromosome. Histones H1 are necessary for the condensation of nucleosome chains into higher-order structures. The polypeptide is Histone H1 (Zea mays (Maize)).